We begin with the raw amino-acid sequence, 197 residues long: MTDQKLAKAKVIFVLGGPGSGKGTQCEKLVQKFHFNHLSSGDLLRAEVQSGSPKGKELKAMMERGELVPLEVVLALLKEAMIKLVDKNCHFLIDGYPRELDQGIKFEKEVCPCLCVINFDVSEEVMRKRLLKRAETSNRVDDNEETIVKRFRTFNELTKPVIEHYKQQNKVITIDASGTVDAIFDKVNHELQKFGVK.

19–24 (GSGKGT) is a binding site for ATP. An NMP region spans residues 39–68 (SSGDLLRAEVQSGSPKGKELKAMMERGELV). Residues Ser-40, Arg-45, 95 to 98 (GYPR), and Gln-102 contribute to the AMP site. The interval 132–142 (KRAETSNRVDD) is LID. Arg-133 contacts ATP. AMP contacts are provided by Arg-139 and Arg-150. Gly-178 is an ATP binding site.

This sequence belongs to the adenylate kinase family. AK1 subfamily. Monomer. It depends on Mg(2+) as a cofactor.

The protein localises to the cytoplasm. It catalyses the reaction AMP + ATP = 2 ADP. It functions in the pathway purine metabolism; purine nucleotide biosynthesis. Catalyzes the reversible transfer of the terminal phosphate group between ATP and AMP. Plays an important role in cellular energy homeostasis and in adenine nucleotide metabolism. This chain is Adenylate kinase 1, found in Schistosoma mansoni (Blood fluke).